The sequence spans 394 residues: NAD(P)H-quinone oxidoreductase subunit H (394 aa).

This sequence belongs to the complex I 49 kDa subunit family. As to quaternary structure, NDH-1 can be composed of about 15 different subunits; different subcomplexes with different compositions have been identified which probably have different functions.

Its subcellular location is the cellular thylakoid membrane. The catalysed reaction is a plastoquinone + NADH + (n+1) H(+)(in) = a plastoquinol + NAD(+) + n H(+)(out). It catalyses the reaction a plastoquinone + NADPH + (n+1) H(+)(in) = a plastoquinol + NADP(+) + n H(+)(out). Its function is as follows. NDH-1 shuttles electrons from an unknown electron donor, via FMN and iron-sulfur (Fe-S) centers, to quinones in the respiratory and/or the photosynthetic chain. The immediate electron acceptor for the enzyme in this species is believed to be plastoquinone. Couples the redox reaction to proton translocation, and thus conserves the redox energy in a proton gradient. Cyanobacterial NDH-1 also plays a role in inorganic carbon-concentration. This Prochlorococcus marinus (strain MIT 9303) protein is NAD(P)H-quinone oxidoreductase subunit H.